Here is a 226-residue protein sequence, read N- to C-terminus: Glutathione peroxidase 3 (226 aa).

A signal peptide spans 1–24 (MARILRASCLLSLLLAGFVPPGRG). U73 is an active-site residue. Position 73 (U73) is a non-standard amino acid, selenocysteine.

Belongs to the glutathione peroxidase family. In terms of assembly, homotetramer. Secreted in plasma.

The protein localises to the secreted. The catalysed reaction is 2 glutathione + H2O2 = glutathione disulfide + 2 H2O. It catalyses the reaction tert-butyl hydroperoxide + 2 glutathione = tert-butanol + glutathione disulfide + H2O. Its function is as follows. Protects cells and enzymes from oxidative damage, by catalyzing the reduction of hydrogen peroxide, lipid peroxides and organic hydroperoxide, by glutathione. In Rattus norvegicus (Rat), this protein is Glutathione peroxidase 3.